A 274-amino-acid polypeptide reads, in one-letter code: Large ribosomal subunit protein uL2 (274 aa).

A disordered region spans residues 221–274 (RGTAMNPVDHPHGGGEGRNFGKHPVTPWGVQTKGKKTRSNKRTDKFIVRRRSKK).

The protein belongs to the universal ribosomal protein uL2 family. Part of the 50S ribosomal subunit. Forms a bridge to the 30S subunit in the 70S ribosome.

Its function is as follows. One of the primary rRNA binding proteins. Required for association of the 30S and 50S subunits to form the 70S ribosome, for tRNA binding and peptide bond formation. It has been suggested to have peptidyltransferase activity; this is somewhat controversial. Makes several contacts with the 16S rRNA in the 70S ribosome. In Yersinia pseudotuberculosis serotype O:1b (strain IP 31758), this protein is Large ribosomal subunit protein uL2.